We begin with the raw amino-acid sequence, 321 residues long: Lipoyl synthase (321 aa).

Positions 68, 73, 79, 94, 98, 101, and 308 each coordinate [4Fe-4S] cluster. In terms of domain architecture, Radical SAM core spans phenylalanine 80–threonine 297.

This sequence belongs to the radical SAM superfamily. Lipoyl synthase family. [4Fe-4S] cluster is required as a cofactor.

The protein resides in the cytoplasm. It carries out the reaction [[Fe-S] cluster scaffold protein carrying a second [4Fe-4S](2+) cluster] + N(6)-octanoyl-L-lysyl-[protein] + 2 oxidized [2Fe-2S]-[ferredoxin] + 2 S-adenosyl-L-methionine + 4 H(+) = [[Fe-S] cluster scaffold protein] + N(6)-[(R)-dihydrolipoyl]-L-lysyl-[protein] + 4 Fe(3+) + 2 hydrogen sulfide + 2 5'-deoxyadenosine + 2 L-methionine + 2 reduced [2Fe-2S]-[ferredoxin]. It participates in protein modification; protein lipoylation via endogenous pathway; protein N(6)-(lipoyl)lysine from octanoyl-[acyl-carrier-protein]: step 2/2. Catalyzes the radical-mediated insertion of two sulfur atoms into the C-6 and C-8 positions of the octanoyl moiety bound to the lipoyl domains of lipoate-dependent enzymes, thereby converting the octanoylated domains into lipoylated derivatives. This Shewanella sp. (strain ANA-3) protein is Lipoyl synthase.